Consider the following 270-residue polypeptide: Glutamate racemase (270 aa).

Substrate-binding positions include 10-11 and 42-43; these read DS and YG. The active-site Proton donor/acceptor is the Cys74. A substrate-binding site is contributed by 75–76; the sequence is NT. Cys189 serves as the catalytic Proton donor/acceptor. Substrate is bound at residue 190-191; that stretch reads TH.

It belongs to the aspartate/glutamate racemases family.

It catalyses the reaction L-glutamate = D-glutamate. It participates in cell wall biogenesis; peptidoglycan biosynthesis. Its function is as follows. Provides the (R)-glutamate required for cell wall biosynthesis. This Bartonella henselae (strain ATCC 49882 / DSM 28221 / CCUG 30454 / Houston 1) (Rochalimaea henselae) protein is Glutamate racemase.